A 191-amino-acid polypeptide reads, in one-letter code: Flagellar transcriptional regulator FlhC (191 aa).

Positions 137, 140, 157, and 160 each coordinate Zn(2+).

It belongs to the FlhC family. Heterohexamer composed of two FlhC and four FlhD subunits. Each FlhC binds a FlhD dimer, forming a heterotrimer, and a hexamer assembles by dimerization of two heterotrimers. Zn(2+) serves as cofactor.

The protein localises to the cytoplasm. Its function is as follows. Functions in complex with FlhD as a master transcriptional regulator that regulates transcription of several flagellar and non-flagellar operons by binding to their promoter region. Activates expression of class 2 flagellar genes, including fliA, which is a flagellum-specific sigma factor that turns on the class 3 genes. Also regulates genes whose products function in a variety of physiological pathways. The polypeptide is Flagellar transcriptional regulator FlhC (Nitrosomonas eutropha (strain DSM 101675 / C91 / Nm57)).